We begin with the raw amino-acid sequence, 208 residues long: FAS-associated death domain protein (208 aa).

Residues 3 to 81 enclose the DED domain; that stretch reads PFLVLLHSVS…RHDLLRRVDD (79 aa). In terms of domain architecture, Death spans 97-181; that stretch reads LCAAFNVICD…LVADLVQEVQ (85 aa). (Microbial infection) N-beta-linked (GlcNAc) arginine glycosylation is present at R117. The segment at 187–208 is disordered; the sequence is QNRSGAMSPMSWNSDASTSEAS. S194 carries the phosphoserine modification.

As to quaternary structure, can self-associate. Component of the AIM2 PANoptosome complex, a multiprotein complex that drives inflammatory cell death (PANoptosis). Component of the death-induced signaling complex (DISC) composed of cell surface receptor FAS/CD95 or TNFRSF1A, adapter protein FADD and the CASP8 protease; recruitment of CASP8 to the complex is required for processing of CASP8 into the p18 and p10 subunits. Interacts (via death domain) with FAS (via death domain). Interacts directly (via DED domain) with NOL3 (via CARD domain); inhibits death-inducing signaling complex (DISC) assembly by inhibiting the increase in FAS-FADD binding induced by FAS activation. Interacts with CFLAR, PEA15 and MBD4. When phosphorylated, part of a complex containing HIPK3 and FAS. May interact with MAVS/IPS1. Interacts with MOCV v-CFLAR protein and PIDD1. Interacts with RIPK1 and TRADD. Interacts with stimulated TNFRSF10B. Interacts with DDX24. In terms of assembly, (Microbial infection) Interacts with human papillomavirus 16/HPV16 protein E6. (Microbial infection) Interacts with molluscum contagiosum virus proteins MC159L/v-CFLAR and MC160L. (Microbial infection) Glycosylated at Arg-117 by enteropathogenic E.coli protein NleB1, C.rodentium protein NleB and S.typhimurium protein Ssek1: arginine GlcNAcylation prevents recruitment of caspase-8 or caspase-10 to the activated Fas (CD95) or TNFR-1 receptors. In terms of tissue distribution, expressed in a wide variety of tissues, except for peripheral blood mononuclear leukocytes.

The protein localises to the cytoplasm. In terms of biological role, apoptotic adapter molecule that recruits caspases CASP8 or CASP10 to the activated FAS/CD95 or TNFRSF1A/TNFR-1 receptors. The resulting aggregate called the death-inducing signaling complex (DISC) performs CASP8 proteolytic activation. Active CASP8 initiates the subsequent cascade of caspases mediating apoptosis. Involved in interferon-mediated antiviral immune response, playing a role in the positive regulation of interferon signaling. The sequence is that of FAS-associated death domain protein from Homo sapiens (Human).